The following is a 252-amino-acid chain: Imidazole glycerol phosphate synthase subunit HisF (252 aa).

Active-site residues include aspartate 11 and aspartate 130.

The protein belongs to the HisA/HisF family. Heterodimer of HisH and HisF.

It is found in the cytoplasm. It catalyses the reaction 5-[(5-phospho-1-deoxy-D-ribulos-1-ylimino)methylamino]-1-(5-phospho-beta-D-ribosyl)imidazole-4-carboxamide + L-glutamine = D-erythro-1-(imidazol-4-yl)glycerol 3-phosphate + 5-amino-1-(5-phospho-beta-D-ribosyl)imidazole-4-carboxamide + L-glutamate + H(+). The protein operates within amino-acid biosynthesis; L-histidine biosynthesis; L-histidine from 5-phospho-alpha-D-ribose 1-diphosphate: step 5/9. In terms of biological role, IGPS catalyzes the conversion of PRFAR and glutamine to IGP, AICAR and glutamate. The HisF subunit catalyzes the cyclization activity that produces IGP and AICAR from PRFAR using the ammonia provided by the HisH subunit. This Geobacillus thermodenitrificans (strain NG80-2) protein is Imidazole glycerol phosphate synthase subunit HisF.